Reading from the N-terminus, the 69-residue chain is uncharacterized protein (69 aa).

As to quaternary structure, interacts with the RNA polymerase core.

This is an uncharacterized protein from Bacillus subtilis (strain 168).